Consider the following 356-residue polypeptide: NADH-quinone oxidoreductase subunit H (356 aa).

The next 8 membrane-spanning stretches (helical) occupy residues 18–38, 87–107, 120–140, 166–186, 205–225, 265–285, 292–312, and 333–353; these read IIMI…IAYI, GVFL…WAVI, VGIL…IMAG, IGFV…SAVV, ILNW…VSAL, AITT…LPPI, WVPG…LIAM, and FLPL…FAGI.

The protein belongs to the complex I subunit 1 family. NDH-1 is composed of 14 different subunits. Subunits NuoA, H, J, K, L, M, N constitute the membrane sector of the complex.

The protein resides in the cell inner membrane. The enzyme catalyses a quinone + NADH + 5 H(+)(in) = a quinol + NAD(+) + 4 H(+)(out). NDH-1 shuttles electrons from NADH, via FMN and iron-sulfur (Fe-S) centers, to quinones in the respiratory chain. The immediate electron acceptor for the enzyme in this species is believed to be ubiquinone. Couples the redox reaction to proton translocation (for every two electrons transferred, four hydrogen ions are translocated across the cytoplasmic membrane), and thus conserves the redox energy in a proton gradient. This subunit may bind ubiquinone. The protein is NADH-quinone oxidoreductase subunit H of Bradyrhizobium sp. (strain ORS 278).